Consider the following 593-residue polypeptide: ATP-dependent lipid A-core flippase (593 aa).

The next 6 helical transmembrane spans lie at Ile-33–Ile-53, Trp-75–Ser-95, Ala-137–Val-157, Ile-164–Ile-184, Gln-262–Val-282, and Gly-292–Ile-312. Residues Val-37–Arg-320 enclose the ABC transmembrane type-1 domain. One can recognise an ABC transporter domain in the interval Ile-352–Ile-586. Position 386–393 (Gly-386–Thr-393) interacts with ATP.

This sequence belongs to the ABC transporter superfamily. Lipid exporter (TC 3.A.1.106) family. Homodimer.

The protein resides in the cell inner membrane. The enzyme catalyses ATP + H2O + lipid A-core oligosaccharideSide 1 = ADP + phosphate + lipid A-core oligosaccharideSide 2.. In terms of biological role, involved in lipopolysaccharide (LPS) biosynthesis. Translocates lipid A-core from the inner to the outer leaflet of the inner membrane. Transmembrane domains (TMD) form a pore in the inner membrane and the ATP-binding domain (NBD) is responsible for energy generation. This chain is ATP-dependent lipid A-core flippase, found in Burkholderia orbicola (strain AU 1054).